The sequence spans 373 residues: Homoserine O-acetyltransferase (373 aa).

The AB hydrolase-1 domain occupies 52 to 356 (NVVMVLHALT…VYGHDGFLVE (305 aa)). S157 serves as the catalytic Nucleophile. R227 provides a ligand contact to substrate. Active-site residues include D320 and H350. D351 contributes to the substrate binding site.

The protein belongs to the AB hydrolase superfamily. MetX family. In terms of assembly, homodimer.

The protein localises to the cytoplasm. It carries out the reaction L-homoserine + acetyl-CoA = O-acetyl-L-homoserine + CoA. It participates in amino-acid biosynthesis; L-methionine biosynthesis via de novo pathway; O-acetyl-L-homoserine from L-homoserine: step 1/1. Transfers an acetyl group from acetyl-CoA to L-homoserine, forming acetyl-L-homoserine. This chain is Homoserine O-acetyltransferase, found in Mycobacterium sp. (strain KMS).